Consider the following 399-residue polypeptide: MKTEYDILIIGAGPGGAMAAKTAAEEGLSVLMVEKRPAIGTPVRCAEGVGKELLHEFIGPDPAWISADIERATIVGPDGTSMSLEAQRAGNEVGYILDRKVFDRALVWQAAEAGAEVQVKTRAIAPILENGFVRGARLQGYGTTTDVRAKVVIAADGVESKFARWCGVDTAVPVNEIETCAQYLLTDIDIDESATVFYLGNEIAPEGYAWVFPKGKRTANVGLGISGKKNLPGNRPIDYLNRFVEKNFPNGKTIECIVGGVSVCTPLASTVSDGLMIVGDAARISDPLTGGGIYNAMYSGRLAAQVAIECIKRGDCSRAALAAYDQQWRVSAMGKALDRNYKIKEYFIRQSDEKLNALAHSFKKINMEKFSTLELIKELIKHNPKLLFELKTLRDSLNS.

Residues G15, E34, C45, A46, G48, R99, A123, D280, G292, and I293 each coordinate FAD.

This sequence belongs to the geranylgeranyl reductase family. DGGGPL reductase subfamily. The cofactor is FAD.

It carries out the reaction a 2,3-bis-O-phytanyl-sn-glycerol 1-phospholipid + 8 oxidized 2[4Fe-4S]-[ferredoxin] = a 2,3-bis-O-(geranylgeranyl)-sn-glycerol 1-phospholipid + 8 reduced 2[4Fe-4S]-[ferredoxin] + 16 H(+). The catalysed reaction is 2,3-bis-O-(phytanyl)-sn-glycerol 1-phosphate + 8 oxidized 2[4Fe-4S]-[ferredoxin] = 2,3-bis-O-(geranylgeranyl)-sn-glycerol 1-phosphate + 8 reduced 2[4Fe-4S]-[ferredoxin] + 16 H(+). The enzyme catalyses a 2,3-bis-O-phytanyl-sn-glycerol 1-phospholipid + 8 A = a 2,3-bis-O-(geranylgeranyl)-sn-glycerol 1-phospholipid + 8 AH2. It catalyses the reaction CDP-2,3-bis-O-(geranylgeranyl)-sn-glycerol + 8 AH2 = CDP-2,3-bis-O-(phytanyl)-sn-glycerol + 8 A. It carries out the reaction archaetidylserine + 8 AH2 = 2,3-bis-O-phytanyl-sn-glycero-3-phospho-L-serine + 8 A. It functions in the pathway membrane lipid metabolism; glycerophospholipid metabolism. In terms of biological role, is involved in the reduction of 2,3-digeranylgeranylglycerophospholipids (unsaturated archaeols) into 2,3-diphytanylglycerophospholipids (saturated archaeols) in the biosynthesis of archaeal membrane lipids. Catalyzes the formation of archaetidic acid (2,3-di-O-phytanyl-sn-glyceryl phosphate) from 2,3-di-O-geranylgeranylglyceryl phosphate (DGGGP) via the hydrogenation of each double bond of the isoprenoid chains. Is also probably able to reduce double bonds of geranyl groups in CDP-2,3-bis-O-(geranylgeranyl)-sn-glycerol and archaetidylserine, thus acting at various stages in the biosynthesis of archaeal membrane lipids. The polypeptide is Digeranylgeranylglycerophospholipid reductase (Methanosphaerula palustris (strain ATCC BAA-1556 / DSM 19958 / E1-9c)).